A 335-amino-acid chain; its full sequence is Probable tRNA N6-adenosine threonylcarbamoyltransferase (335 aa).

Positions 109, 113, and 130 each coordinate a divalent metal cation. Residues Tyr130–Gly134, Asp162, Gly177, Glu181, and Asn266 contribute to the substrate site. Asp294 serves as a coordination point for a divalent metal cation.

It belongs to the KAE1 / TsaD family. Component of the EKC/KEOPS complex; the whole complex dimerizes. A divalent metal cation serves as cofactor.

The protein localises to the cytoplasm. It localises to the nucleus. It carries out the reaction L-threonylcarbamoyladenylate + adenosine(37) in tRNA = N(6)-L-threonylcarbamoyladenosine(37) in tRNA + AMP + H(+). Component of the EKC/KEOPS complex that is required for the formation of a threonylcarbamoyl group on adenosine at position 37 (t(6)A37) in tRNAs that read codons beginning with adenine. The complex is probably involved in the transfer of the threonylcarbamoyl moiety of threonylcarbamoyl-AMP (TC-AMP) to the N6 group of A37. Osgep likely plays a direct catalytic role in this reaction, but requires other protein(s) of the complex to fulfill this activity. This chain is Probable tRNA N6-adenosine threonylcarbamoyltransferase, found in Nematostella vectensis (Starlet sea anemone).